A 251-amino-acid chain; its full sequence is Triosephosphate isomerase (251 aa).

Residue 9-11 (NWK) participates in substrate binding. The active-site Electrophile is the histidine 94. Glutamate 166 acts as the Proton acceptor in catalysis. Residues glycine 172, serine 211, and 232 to 233 (GG) contribute to the substrate site.

It belongs to the triosephosphate isomerase family. Homodimer.

It is found in the cytoplasm. It carries out the reaction D-glyceraldehyde 3-phosphate = dihydroxyacetone phosphate. It participates in carbohydrate biosynthesis; gluconeogenesis. Its pathway is carbohydrate degradation; glycolysis; D-glyceraldehyde 3-phosphate from glycerone phosphate: step 1/1. Involved in the gluconeogenesis. Catalyzes stereospecifically the conversion of dihydroxyacetone phosphate (DHAP) to D-glyceraldehyde-3-phosphate (G3P). The sequence is that of Triosephosphate isomerase from Xanthomonas axonopodis pv. citri (strain 306).